Consider the following 188-residue polypeptide: Adenine phosphoribosyltransferase (188 aa).

This sequence belongs to the purine/pyrimidine phosphoribosyltransferase family. In terms of assembly, homodimer.

The protein localises to the cytoplasm. The enzyme catalyses AMP + diphosphate = 5-phospho-alpha-D-ribose 1-diphosphate + adenine. It participates in purine metabolism; AMP biosynthesis via salvage pathway; AMP from adenine: step 1/1. In terms of biological role, catalyzes a salvage reaction resulting in the formation of AMP, that is energically less costly than de novo synthesis. The sequence is that of Adenine phosphoribosyltransferase from Paraburkholderia phytofirmans (strain DSM 17436 / LMG 22146 / PsJN) (Burkholderia phytofirmans).